The primary structure comprises 277 residues: MGIKTYKPKTSSLRYKTTLSFDDLSKGNDPLKSLTKGKKFKSGRDSSGRISIRRRGGGHKRKYRLIDFNRRDKFSIPARVASIEYDPNRSANIALLVYKDGEKRYIISPKDIKVGDVLESGPNAPIKIGNALPLENIPIGRTVHNIELNVGKGGQLVRSAGGYAMILASDGNYVTVKLSSGEVRLIFKKCIATIGEIGNEDYVNVSIGKAGKSRWLGRRPKVRGVAMNPVDHPHGGGEGKTSGGRHPVSPWGQPTKGYKTRKKKRYSDKFIIKRRNK.

Disordered stretches follow at residues 32 to 58 and 225 to 277; these read KSLTKGKKFKSGRDSSGRISIRRRGGG and VAMN…RRNK. Positions 258 to 277 are enriched in basic residues; that stretch reads YKTRKKKRYSDKFIIKRRNK.

Belongs to the universal ribosomal protein uL2 family. As to quaternary structure, part of the 50S ribosomal subunit. Forms a bridge to the 30S subunit in the 70S ribosome.

One of the primary rRNA binding proteins. Required for association of the 30S and 50S subunits to form the 70S ribosome, for tRNA binding and peptide bond formation. It has been suggested to have peptidyltransferase activity; this is somewhat controversial. Makes several contacts with the 16S rRNA in the 70S ribosome. In Borreliella afzelii (strain PKo) (Borrelia afzelii), this protein is Large ribosomal subunit protein uL2.